Here is a 908-residue protein sequence, read N- to C-terminus: Protein translocase subunit SecA (908 aa).

ATP-binding positions include Gln87, 105–109 (GEGKT), and Asp512. A disordered region spans residues 866–908 (GSDEDDAIAAHTPMIRDGDKVGRNDPCPCGSGRKYKQCHGKLS). Positions 879–888 (MIRDGDKVGR) are enriched in basic and acidic residues. Residues Cys892, Cys894, Cys903, and His904 each coordinate Zn(2+). The span at 898–908 (RKYKQCHGKLS) shows a compositional bias: basic residues.

Belongs to the SecA family. As to quaternary structure, monomer and homodimer. Part of the essential Sec protein translocation apparatus which comprises SecA, SecYEG and auxiliary proteins SecDF-YajC and YidC. Zn(2+) serves as cofactor.

The protein localises to the cell inner membrane. It localises to the cytoplasm. It carries out the reaction ATP + H2O + cellular proteinSide 1 = ADP + phosphate + cellular proteinSide 2.. In terms of biological role, part of the Sec protein translocase complex. Interacts with the SecYEG preprotein conducting channel. Has a central role in coupling the hydrolysis of ATP to the transfer of proteins into and across the cell membrane, serving both as a receptor for the preprotein-SecB complex and as an ATP-driven molecular motor driving the stepwise translocation of polypeptide chains across the membrane. The sequence is that of Protein translocase subunit SecA from Shewanella oneidensis (strain ATCC 700550 / JCM 31522 / CIP 106686 / LMG 19005 / NCIMB 14063 / MR-1).